The sequence spans 63 residues: Hyphancin-3E (63 aa).

The N-terminal stretch at 1-22 is a signal peptide; sequence MNFSRILFFVFTCFVALASVSG. Residues 23-26 constitute a propeptide, removed by a dipeptidylpeptidase; that stretch reads APEP. Position 61 is a leucine amide (L61).

The protein belongs to the cecropin family.

It is found in the secreted. Has antibacterial activity. The chain is Hyphancin-3E from Hyphantria cunea (Fall webworm moth).